The following is a 1280-amino-acid chain: Clustered mitochondria protein homolog (1280 aa).

Positions 1 to 27 (MAASSNDASKSAMANSNVTTEVAQTPS) are enriched in polar residues. 2 disordered regions span residues 1 to 49 (MAAS…GQLP) and 169 to 189 (GLDQ…LADY). Residues 32 to 43 (VNGEVEATEEDG) are compositionally biased toward acidic residues. Residues 338–582 (DLARTQESYL…RLTPLDVAWI (245 aa)) enclose the Clu domain. Disordered stretches follow at residues 633 to 669 (KANK…EPEQ), 905 to 943 (GAAV…AVSL), and 1214 to 1280 (TGRN…TQKP). The segment covering 635-648 (NKARGGRRRLPKAQ) has biased composition (basic residues). Positions 649–669 (KKADAGKEVDGEKKAEAEPEQ) are enriched in basic and acidic residues. The segment covering 1221 to 1235 (PAAATPSVSDAAAAA) has biased composition (low complexity). A compositionally biased stretch (basic and acidic residues) spans 1245-1261 (VDQRKIEDLLKYIEGES). Basic residues predominate over residues 1265–1280 (PTKKRTQNPRKRTQKP).

It belongs to the CLU family. In terms of assembly, may associate with the eukaryotic translation initiation factor 3 (eIF-3) complex.

It is found in the cytoplasm. In terms of biological role, mRNA-binding protein involved in proper cytoplasmic distribution of mitochondria. This chain is Clustered mitochondria protein homolog, found in Phaeosphaeria nodorum (strain SN15 / ATCC MYA-4574 / FGSC 10173) (Glume blotch fungus).